The primary structure comprises 168 residues: Coiled-coil domain-containing protein 200 (168 aa).

Residues leucine 16–lysine 50 adopt a coiled-coil conformation. Residues methionine 23 to tryptophan 168 are disordered. Residues glutamine 31–glutamine 52 show a composition bias toward basic and acidic residues. The segment covering serine 70–serine 82 has biased composition (low complexity). 2 stretches are compositionally biased toward pro residues: residues valine 83–serine 94 and glycine 104–threonine 117. 2 stretches are compositionally biased toward polar residues: residues arginine 124–glutamine 138 and proline 145–tryptophan 168.

The protein is Coiled-coil domain-containing protein 200 of Homo sapiens (Human).